The primary structure comprises 389 residues: Basigin (389 aa).

The signal sequence occupies residues 1–21 (MAAALLLALAFTLLSGQGACA). The Extracellular portion of the chain corresponds to 22–325 (AAGFLKAPLS…ETISLRVRSR (304 aa)). In terms of domain architecture, Ig-like spans 37–120 (GGSVVLHCEA…SSDPDRNHLT (84 aa)). Disulfide bonds link C44/C108, C157/C203, and C242/C305. The region spanning 138–219 (EPGTIQTSVQ…VGRSEINVEG (82 aa)) is the Ig-like C2-type domain. N-linked (GlcNAc...) asparagine glycosylation is found at N160, N270, and N306. Residues 221–319 (PRIKVGKKSE…AQGTTRETIS (99 aa)) enclose the Ig-like V-type domain. Residues 326–349 (MAALWPFLGIVAEVLVLVTIIFIY) traverse the membrane as a helical segment. Residues 350–389 (EKRRKPDQTLDEDDPGAAPLKGSGTHMNDKDKNVRQRNAT) are Cytoplasmic-facing. Positions 356-389 (DQTLDEDDPGAAPLKGSGTHMNDKDKNVRQRNAT) are disordered. T358 bears the Phosphothreonine mark. Position 372 is a phosphoserine (S372).

As to quaternary structure, interacts with NXNL1. Interacts with SLC2A1 and SLC16A1/GLUT1. Interacts with XKR8; promoting its localization at the cell membrane. Interacts with ATP1B2, MAG and L1CAM. Interacts with SLC16A7. Interacts with VEGFA, KDR/VEGFR2, PPIA/CYPA, SLC1A3, SLC16A11 and SLC16A12. Interacts with PPIL2; regulates BSG transport to the cell membrane. Interacts with SLC16A1; interaction mediates SLC16A1 targeting to the plasma membrane. Interacts with SLC16A3; interaction mediates SLC16A3 targeting to the plasma membrane. In terms of assembly, interacts with SLC16A6; this interaction mediates targeting to the plasma membrane. Post-translationally, N-glycosylated. N-glycosylated. During spermatogenesis, probably deglycosylated during epididymal transit. In terms of tissue distribution, retina-specific. Expressed in both rods and cones (at protein level). Testis and caput, corpus and cauda epididymides (at protein level). Expressed in the brain, lung, liver, kidney, heart, spleen, uterus, retina and skeletal muscle.

The protein resides in the cell membrane. It is found in the photoreceptor inner segment. Its subcellular location is the cell projection. It localises to the cilium. The protein localises to the photoreceptor outer segment. The protein resides in the endoplasmic reticulum membrane. It is found in the basolateral cell membrane. Essential for normal retinal maturation and development. Acts as a retinal cell surface receptor for NXNL1 and plays an important role in NXNL1-mediated survival of retinal cone photoreceptors. In association with glucose transporter SLC16A1/GLUT1 and NXNL1, promotes retinal cone survival by enhancing aerobic glycolysis and accelerating the entry of glucose into photoreceptors. Functionally, signaling receptor for cyclophilins, essential for PPIA/CYPA and PPIB/CYPB-dependent signaling related to chemotaxis and adhesion of immune cells. Plays an important role in targeting the monocarboxylate transporters SLC16A1, SLC16A3 and SLC16A8 to the plasma membrane. Acts as a coreceptor for vascular endothelial growth factor receptor 2 (KDR/VEGFR2) in endothelial cells enhancing its VEGFA-mediated activation and downstream signaling. Promotes angiogenesis through EPAS1/HIF2A-mediated up-regulation of VEGFA and KDR/VEGFR2 in endothelial cells. Plays an important role in spermatogenesis; mediates interactions between germ cells and Sertoli cell and is essential for the development/differentiation of germ cells to round spermatids. This chain is Basigin (Bsg), found in Mus musculus (Mouse).